Consider the following 278-residue polypeptide: Ribosomal RNA small subunit methyltransferase A (278 aa).

S-adenosyl-L-methionine-binding residues include Asn-18, Leu-20, Gly-45, Glu-66, Asp-89, and Asn-110.

It belongs to the class I-like SAM-binding methyltransferase superfamily. rRNA adenine N(6)-methyltransferase family. RsmA subfamily.

It is found in the cytoplasm. The enzyme catalyses adenosine(1518)/adenosine(1519) in 16S rRNA + 4 S-adenosyl-L-methionine = N(6)-dimethyladenosine(1518)/N(6)-dimethyladenosine(1519) in 16S rRNA + 4 S-adenosyl-L-homocysteine + 4 H(+). Specifically dimethylates two adjacent adenosines (A1518 and A1519) in the loop of a conserved hairpin near the 3'-end of 16S rRNA in the 30S particle. May play a critical role in biogenesis of 30S subunits. The polypeptide is Ribosomal RNA small subunit methyltransferase A (Cupriavidus metallidurans (strain ATCC 43123 / DSM 2839 / NBRC 102507 / CH34) (Ralstonia metallidurans)).